A 227-amino-acid polypeptide reads, in one-letter code: Phosphatidate cytidylyltransferase (227 aa).

Transmembrane regions (helical) follow at residues 31 to 51 (FVIAILWFKPLFYILMILVGM), 65 to 85 (IPYLLIGLIIIPIPISLLTFL), 93 to 113 (WLIMLYFCIIWSVDSFAMIGG), 131 to 151 (WSGLVTGVLSAGLVAVLASFI), 165 to 185 (IYLFIISCILALIAQSSDLFI), and 206 to 226 (GVLDRFDSIILTAPVLFFISI).

Belongs to the CDS family.

The protein localises to the cell membrane. The enzyme catalyses a 1,2-diacyl-sn-glycero-3-phosphate + CTP + H(+) = a CDP-1,2-diacyl-sn-glycerol + diphosphate. Its pathway is phospholipid metabolism; CDP-diacylglycerol biosynthesis; CDP-diacylglycerol from sn-glycerol 3-phosphate: step 3/3. This Rickettsia felis (strain ATCC VR-1525 / URRWXCal2) (Rickettsia azadi) protein is Phosphatidate cytidylyltransferase (cdsA).